The chain runs to 380 residues: Alcohol dehydrogenase 3 (380 aa).

Zn(2+) contacts are provided by Cys-48, Thr-50, His-70, Cys-100, Cys-103, Cys-106, Cys-114, and Cys-178. Thr-50 and His-70 together coordinate an alcohol. Thr-50 lines the NAD(+) pocket. NAD(+)-binding positions include 203–208, Asp-227, Arg-232, Thr-273, Val-296, 296–298, Phe-323, and Arg-373; these read GLGAVG and VGV.

The protein belongs to the zinc-containing alcohol dehydrogenase family. Homodimer. Homotetramer. Zn(2+) serves as cofactor.

It localises to the cytoplasm. It catalyses the reaction a primary alcohol + NAD(+) = an aldehyde + NADH + H(+). The catalysed reaction is a secondary alcohol + NAD(+) = a ketone + NADH + H(+). The sequence is that of Alcohol dehydrogenase 3 (ADH3) from Solanum tuberosum (Potato).